The sequence spans 414 residues: MYHRNILVEQTDPEIFAAIQAENARQEHHIELIASENYASPAVMAAQGSQLTNKYAEGYPGRRYYGGCEYVDVAEQLAIDRIKQIFGADAANVQPHCGASANEAVFLAFLKPGDTIMGMSLAEGGHLTHGMALNMSGKWFNVVSYGLNDKEEIDYDAMERKAHETRPKLIIAGASAYSLRIDFERFAKVAKAVGAIFMVDIAHYAGLVAAGVYPNPVPHADVVTSTTHKSLRGPRGGIILMKAEHEKAINSAIFPGLQGGPLMHVIAAKAVAFKEALSPEFKTYQQQVLTNARIVAETLTQRGLRIVSGRTESHLMLVDLRAKGITGKEAEAVLGSAHMTINKNAIPNDPEKPMVTSGVRIGTPAMTTRGFKDEEARVTANLIADVLDNPRDAANIEAVRAKVNALTSRFPVYR.

Residues Leu-121 and 125-127 each bind (6S)-5,6,7,8-tetrahydrofolate; that span reads GHL. Lys-229 is subject to N6-(pyridoxal phosphate)lysine.

The protein belongs to the SHMT family. Homodimer. Requires pyridoxal 5'-phosphate as cofactor.

The protein localises to the cytoplasm. The catalysed reaction is (6R)-5,10-methylene-5,6,7,8-tetrahydrofolate + glycine + H2O = (6S)-5,6,7,8-tetrahydrofolate + L-serine. It participates in one-carbon metabolism; tetrahydrofolate interconversion. The protein operates within amino-acid biosynthesis; glycine biosynthesis; glycine from L-serine: step 1/1. Catalyzes the reversible interconversion of serine and glycine with tetrahydrofolate (THF) serving as the one-carbon carrier. This reaction serves as the major source of one-carbon groups required for the biosynthesis of purines, thymidylate, methionine, and other important biomolecules. Also exhibits THF-independent aldolase activity toward beta-hydroxyamino acids, producing glycine and aldehydes, via a retro-aldol mechanism. The sequence is that of Serine hydroxymethyltransferase from Polaromonas sp. (strain JS666 / ATCC BAA-500).